A 256-amino-acid chain; its full sequence is Catechol O-methyltransferase A (256 aa).

Residues 1–27 (MLWVVLAVVVVLASVLVLLRQSSGLLA) form the signal peptide. The N-linked (GlcNAc...) asparagine glycan is linked to Asn58. The S-adenosyl-L-methionine site is built by Val84, Ser114, Glu132, and Asp183. Asp183 contacts Mg(2+). Residue Lys186 participates in substrate binding. Residues Asp211 and Asn212 each coordinate Mg(2+). Asn212 and Glu241 together coordinate substrate.

This sequence belongs to the class I-like SAM-binding methyltransferase superfamily. Cation-dependent O-methyltransferase family. Mg(2+) is required as a cofactor. Widely expressed. Has higher expression in females compared to males. Strongly expressed in liver and diencephalon. Expressed at lower levels in hindbrain, spinal cord, eye, telencephalon, spleen, gut, gill and muscle. Detected in ovary and testis. In eye, detected in all layers of the retina with highest expression in the inner nuclear layer. In gut, expressed in the lamina propria but has little or no expression in gut epithelium. In brain, has strongest expression near the midline of the telencephalon, in the periventricular gray zone of the optic tectum, in the preglomerular nucleus, and near the walls of the diencephalic ventricle.

The protein resides in the secreted. It catalyses the reaction a catechol + S-adenosyl-L-methionine = a guaiacol + S-adenosyl-L-homocysteine + H(+). Its function is as follows. Catalyzes the O-methylation, and thereby the inactivation, of catecholamine neurotransmitters and catechol hormones. Shows highest activity towards catecholestrogens and dobutamine. Also has lower activity towards L-DOPA, dopamine and epinephrine. Active towards the xenobiotic compounds methyl-DOPA, carbidopa, isoproterenol, and apomorphine. The chain is Catechol O-methyltransferase A from Danio rerio (Zebrafish).